The following is a 334-amino-acid chain: Rhomboid-like protein 14, mitochondrial (334 aa).

The transit peptide at 1–87 (MENFGEGRRS…RLFLSAFYHV (87 aa)) directs the protein to the mitochondrion. 4 helical membrane passes run 114–134 (EFASMVFTLIGMSQGVTLLLA), 146–166 (AYYNEYAVGFSGVLFAMKVVL), 176–196 (VYGILVPTKYAAWAELILVQM), and 197–217 (FVPNASFLGHLGGILAGIIYL). Ser-156 functions as the Nucleophile in the catalytic mechanism. His-206 acts as the Charge relay system in catalysis. Residues 273 to 302 (GPGIWRCQSCTYDNSGWLSACEMCGSGRAR) form a RanBP2-type zinc finger.

It belongs to the peptidase S54 family.

It is found in the mitochondrion membrane. Its function is as follows. Probable rhomboid-type serine protease that catalyzes intramembrane proteolysis. May function in the heat-shock response pathway. This Arabidopsis thaliana (Mouse-ear cress) protein is Rhomboid-like protein 14, mitochondrial.